Reading from the N-terminus, the 609-residue chain is QWRF motif-containing protein 4 (609 aa).

Disordered stretches follow at residues 1–227 (MQVG…IRGN) and 271–369 (EVSS…TAQS). 2 stretches are compositionally biased toward polar residues: residues 11–21 (GKQQQSVSDAT) and 46–57 (EVSSRYRSPTPT). Composition is skewed to low complexity over residues 98–110 (PVSD…PVSS) and 129–143 (SLSV…SVPV). The span at 151–180 (VTSSTDRTLRPSSSNIAHKQQSETTSVTRK) shows a compositional bias: polar residues. Composition is skewed to low complexity over residues 271 to 285 (EVSS…SSTE) and 302 to 332 (SAPG…PSRG). The QWRF motif signature appears at 407 to 410 (QWRF). A disordered region spans residues 588–609 (EEEVRDDAESSPLLPLSKFQWP).

The protein belongs to the QWRF family.

This is QWRF motif-containing protein 4 (QWRF4) from Arabidopsis thaliana (Mouse-ear cress).